Consider the following 144-residue polypeptide: uncharacterized protein (144 aa).

The disordered stretch occupies residues P98 to L127.

This is an uncharacterized protein from Aedes vexans (Inland floodwater mosquito).